The chain runs to 245 residues: Homeobox protein goosecoid (245 aa).

The segment at residues 150-209 (KRRHRTIFTDEQLEALENLFQETKYPDVGTREQLARKVHLREEKVEVWFKNRRAKWRRQK) is a DNA-binding region (homeobox). Residues 203–245 (AKWRRQKRSSSEESENAQKWNKASKTSPEKRQEDGKSDLDSDS) are disordered. Residues 219-228 (AQKWNKASKT) are compositionally biased toward polar residues. Residues 229–245 (SPEKRQEDGKSDLDSDS) are compositionally biased toward basic and acidic residues.

Belongs to the paired homeobox family. Bicoid subfamily.

The protein resides in the nucleus. In terms of biological role, involved in the development of the organizer region in the gastrula (Hensen node in chicken). The sequence is that of Homeobox protein goosecoid (GSC) from Gallus gallus (Chicken).